Consider the following 505-residue polypeptide: Membrane-bound O-acyltransferase GUP1 (505 aa).

Topologically, residues M1–N217 are extracellular. Residues F218–T238 form a helical membrane-spanning segment. Residues F239–R266 are Cytoplasmic-facing. The helical transmembrane segment at F267–S287 threads the bilayer. Topologically, residues K288–T296 are extracellular. Residues P297 to I317 traverse the membrane as a helical segment. Over P318–R377 the chain is Cytoplasmic. Transmembrane regions (helical) follow at residues I378–L398 and L399–F419. Residue H392 is part of the active site. Topologically, residues K420–H430 are cytoplasmic. The chain crosses the membrane as a helical span at residues V431–F451. At C452–T464 the chain is on the extracellular side. The chain crosses the membrane as a helical span at residues L465–G485. Residues S486–C505 are Cytoplasmic-facing.

The protein belongs to the membrane-bound acyltransferase family.

It is found in the cell membrane. Its subcellular location is the endoplasmic reticulum membrane. The protein resides in the mitochondrion membrane. Functionally, membrane-bound O-acyltransferase involved in the remodeling of glycosylphosphatidylinositol (GPI) anchors. Acts only on GPI-anchored proteins, but not on free GPI lipids. Also involved in lipid metabolism, having profound effects on sphingolipid-sterol-ordered domains integrity and assembly. Involved in cell integrity and apoptosis. The sequence is that of Membrane-bound O-acyltransferase GUP1 (GUP1) from Millerozyma farinosa (Yeast).